The primary structure comprises 364 residues: UDP-N-acetylglucosamine--N-acetylmuramyl-(pentapeptide) pyrophosphoryl-undecaprenol N-acetylglucosamine transferase (364 aa).

UDP-N-acetyl-alpha-D-glucosamine-binding positions include 10-12, N124, R166, S196, and Q297; that span reads TGG.

Belongs to the glycosyltransferase 28 family. MurG subfamily.

It localises to the cell membrane. It carries out the reaction di-trans,octa-cis-undecaprenyl diphospho-N-acetyl-alpha-D-muramoyl-L-alanyl-D-glutamyl-meso-2,6-diaminopimeloyl-D-alanyl-D-alanine + UDP-N-acetyl-alpha-D-glucosamine = di-trans,octa-cis-undecaprenyl diphospho-[N-acetyl-alpha-D-glucosaminyl-(1-&gt;4)]-N-acetyl-alpha-D-muramoyl-L-alanyl-D-glutamyl-meso-2,6-diaminopimeloyl-D-alanyl-D-alanine + UDP + H(+). The protein operates within cell wall biogenesis; peptidoglycan biosynthesis. In terms of biological role, cell wall formation. Catalyzes the transfer of a GlcNAc subunit on undecaprenyl-pyrophosphoryl-MurNAc-pentapeptide (lipid intermediate I) to form undecaprenyl-pyrophosphoryl-MurNAc-(pentapeptide)GlcNAc (lipid intermediate II). In Thermoanaerobacter pseudethanolicus (strain ATCC 33223 / 39E) (Clostridium thermohydrosulfuricum), this protein is UDP-N-acetylglucosamine--N-acetylmuramyl-(pentapeptide) pyrophosphoryl-undecaprenol N-acetylglucosamine transferase.